Reading from the N-terminus, the 541-residue chain is Paromamine 6'-oxidase (541 aa).

The disordered stretch occupies residues 1-29 (MKRLRGTLPSDARHAWHPEPLGPAHRDGW). H470 serves as the catalytic Proton acceptor.

It belongs to the GMC oxidoreductase family. FAD serves as cofactor.

The catalysed reaction is 6'''-deamino-6'''-hydroxyneomycin C + O2 = 6'''-deamino-6'''-oxoneomycin C + H2O2. The enzyme catalyses paromamine + O2 = 6'-oxoparomamine + H2O2. It participates in antibiotic biosynthesis; neomycin biosynthesis. Functionally, glucosaminyl-6'-oxidase involved in the biosynthetic pathway of neomycin by mediating FAD-dependent dehydrogenation of paromamine to 6'-dehydro-6'-oxoparomamine. Works in combination with neamine transaminase to replace the 6-hydroxy group of paromamine with an amino group. Also able to collaborate with neomycin C transaminase to replace the 6'''-hydroxy group of 6'''-hydroxyneomycin C with an amino group. In Streptomyces fradiae (Streptomyces roseoflavus), this protein is Paromamine 6'-oxidase (neoG).